The chain runs to 443 residues: Xaa-Pro dipeptidase (443 aa).

Mn(2+) is bound by residues D246, D257, H339, E384, and E423.

Belongs to the peptidase M24B family. Bacterial-type prolidase subfamily. It depends on Mn(2+) as a cofactor.

The catalysed reaction is Xaa-L-Pro dipeptide + H2O = an L-alpha-amino acid + L-proline. Its function is as follows. Splits dipeptides with a prolyl residue in the C-terminal position. The chain is Xaa-Pro dipeptidase from Escherichia coli O157:H7.